A 152-amino-acid polypeptide reads, in one-letter code: Large ribosomal subunit protein bL9 (152 aa).

Belongs to the bacterial ribosomal protein bL9 family.

Binds to the 23S rRNA. This Prochlorococcus marinus (strain MIT 9211) protein is Large ribosomal subunit protein bL9.